Here is a 111-residue protein sequence, read N- to C-terminus: Iron-sulfur cluster assembly protein CyaY (111 aa).

It belongs to the frataxin family.

Involved in iron-sulfur (Fe-S) cluster assembly. May act as a regulator of Fe-S biogenesis. The sequence is that of Iron-sulfur cluster assembly protein CyaY from Cupriavidus pinatubonensis (strain JMP 134 / LMG 1197) (Cupriavidus necator (strain JMP 134)).